The sequence spans 430 residues: 3-phosphoshikimate 1-carboxyvinyltransferase (430 aa).

3-phosphoshikimate contacts are provided by K20, S21, and R25. K20 lines the phosphoenolpyruvate pocket. The phosphoenolpyruvate site is built by G90 and R118. 3-phosphoshikimate contacts are provided by S163, S164, Q165, S191, D311, and K338. Q165 contacts phosphoenolpyruvate. The active-site Proton acceptor is the D311. Phosphoenolpyruvate contacts are provided by R342 and R383.

It belongs to the EPSP synthase family. In terms of assembly, monomer.

The protein localises to the cytoplasm. It catalyses the reaction 3-phosphoshikimate + phosphoenolpyruvate = 5-O-(1-carboxyvinyl)-3-phosphoshikimate + phosphate. It participates in metabolic intermediate biosynthesis; chorismate biosynthesis. Its function is as follows. Catalyzes the transfer of the enolpyruvyl moiety of phosphoenolpyruvate (PEP) to the 5-hydroxyl of shikimate-3-phosphate (S3P) to produce enolpyruvyl shikimate-3-phosphate and inorganic phosphate. This Methanosarcina mazei (strain ATCC BAA-159 / DSM 3647 / Goe1 / Go1 / JCM 11833 / OCM 88) (Methanosarcina frisia) protein is 3-phosphoshikimate 1-carboxyvinyltransferase.